Consider the following 514-residue polypeptide: Calcium-binding mitochondrial carrier protein SCaMC-2 (514 aa).

Topologically, residues 1–234 are mitochondrial intermembrane; that stretch reads MARPRSLVSP…EKQTGMWWRH (234 aa). 4 EF-hand domains span residues 56-91, 92-122, 123-158, and 159-194; these read EHER…LGVH, RTEL…HYLR, DHEK…LGVN, and ISEQ…HSAE. Residues Asp69, Asn71, Asp73, Asp80, Asp105, Asp107, Asp109, Gln111, and Glu116 each contribute to the Ca(2+) site. Solcar repeat units follow at residues 229 to 315, 323 to 408, and 420 to 508; these read GMWW…IKRI, LGIH…LKNA, and PGVF…LKLT. A helical membrane pass occupies residues 235–252; it reads LVAGGGAGAVSRTCTAPL. Residues 253–289 lie on the Mitochondrial matrix side of the membrane; sequence DRLKVLMQVHASRSNNMSILGGFTHMIREGGFRSLWR. The helical transmembrane segment at 290-309 threads the bilayer; the sequence is GNGINVIKIAPESAIKFMAY. The Mitochondrial intermembrane segment spans residues 310–332; it reads EQIKRIIGSNQETLGIHERFVAG. A helical transmembrane segment spans residues 333-346; the sequence is SLAGVIAQSSIYPM. The Mitochondrial matrix segment spans residues 347-382; sequence EVLKTRMALRKTGQYQGVLDCGKKILLQEGLSAFYK. Residues 383-402 traverse the membrane as a helical segment; sequence GYVPNMLGIIPYAGIDLAVY. The Mitochondrial intermembrane segment spans residues 403 to 425; the sequence is ETLKNAWLQRYATSSADPGVFVL. Residues 426–443 traverse the membrane as a helical segment; the sequence is LACGTVSSTCGQLASYPL. At 444–482 the chain is on the mitochondrial matrix side; the sequence is ALVRTRMQAEASVEGAPQMTMSKLFKHIVKTEGAFGLYR. Residues 483–502 traverse the membrane as a helical segment; that stretch reads GLAPNFMKVIPAVSISYVVY. Topologically, residues 503–514 are mitochondrial intermembrane; sequence ENLKLTLGVQSR.

It belongs to the mitochondrial carrier (TC 2.A.29) family.

Its subcellular location is the mitochondrion inner membrane. Functionally, calcium-dependent mitochondrial solute carrier. The polypeptide is Calcium-binding mitochondrial carrier protein SCaMC-2 (slc25a25) (Xenopus laevis (African clawed frog)).